The primary structure comprises 653 residues: Dystrotelin (653 aa).

The segment at 223–279 (THPVRCSVCRTFPIIGLRYHCLKCLDFDICELCFLSGLHKNSHEKSHTVMEECVQMS) adopts a ZZ-type zinc-finger fold. Zn(2+) is bound by residues Cys228, Cys231, Cys243, Cys246, Cys252, Cys255, His265, and His269. Residues 384 to 411 (RDSLNTLLRERRLLRKQLHRYKQKLQGT) are a coiled coil.

Strongly expressed in the nervous and muscular tissues.

It localises to the cell membrane. The polypeptide is Dystrotelin (Dytn) (Mus musculus (Mouse)).